The primary structure comprises 91 residues: Small ribosomal subunit protein uS15 (91 aa).

This sequence belongs to the universal ribosomal protein uS15 family. In terms of assembly, part of the 30S ribosomal subunit. Forms a bridge to the 50S subunit in the 70S ribosome, contacting the 23S rRNA.

Functionally, one of the primary rRNA binding proteins, it binds directly to 16S rRNA where it helps nucleate assembly of the platform of the 30S subunit by binding and bridging several RNA helices of the 16S rRNA. In terms of biological role, forms an intersubunit bridge (bridge B4) with the 23S rRNA of the 50S subunit in the ribosome. The chain is Small ribosomal subunit protein uS15 from Rickettsia akari (strain Hartford).